The primary structure comprises 78 residues: Large ribosomal subunit protein eL20 (78 aa).

It belongs to the eukaryotic ribosomal protein eL20 family. In terms of assembly, part of the 50S ribosomal subunit. Binds 23S rRNA.

The protein is Large ribosomal subunit protein eL20 of Pyrobaculum calidifontis (strain DSM 21063 / JCM 11548 / VA1).